The sequence spans 802 residues: Leucine--tRNA ligase (802 aa).

Positions 40–51 (PYPSGAGLHVGH) match the 'HIGH' region motif. Residues 576–580 (KMSKS) carry the 'KMSKS' region motif. Lys579 provides a ligand contact to ATP.

It belongs to the class-I aminoacyl-tRNA synthetase family.

Its subcellular location is the cytoplasm. The enzyme catalyses tRNA(Leu) + L-leucine + ATP = L-leucyl-tRNA(Leu) + AMP + diphosphate. The protein is Leucine--tRNA ligase of Bacillus cereus (strain ATCC 10987 / NRS 248).